Here is a 310-residue protein sequence, read N- to C-terminus: GMP synthase [glutamine-hydrolyzing] subunit B (310 aa).

The region spanning 1–187 (MSTSSYIDQI…LGLRTDLQPF (187 aa)) is the GMPS ATP-PPase domain. 27–33 (SGGQDSS) provides a ligand contact to ATP.

Heterodimer composed of a glutamine amidotransferase subunit (A) and a GMP-binding subunit (B).

The catalysed reaction is XMP + L-glutamine + ATP + H2O = GMP + L-glutamate + AMP + diphosphate + 2 H(+). It participates in purine metabolism; GMP biosynthesis; GMP from XMP (L-Gln route): step 1/1. Functionally, catalyzes the synthesis of GMP from XMP. The chain is GMP synthase [glutamine-hydrolyzing] subunit B (guaAB) from Thermoplasma acidophilum (strain ATCC 25905 / DSM 1728 / JCM 9062 / NBRC 15155 / AMRC-C165).